The primary structure comprises 565 residues: NAD-dependent malic enzyme (565 aa).

Tyr104 serves as the catalytic Proton donor. Arg157 is a binding site for NAD(+). The active-site Proton acceptor is Lys175. A divalent metal cation-binding residues include Glu246, Asp247, and Asp270. 2 residues coordinate NAD(+): Asp270 and Asn418.

It belongs to the malic enzymes family. As to quaternary structure, homotetramer. The cofactor is Mg(2+). Mn(2+) is required as a cofactor.

The enzyme catalyses (S)-malate + NAD(+) = pyruvate + CO2 + NADH. It carries out the reaction oxaloacetate + H(+) = pyruvate + CO2. This chain is NAD-dependent malic enzyme, found in Pectobacterium carotovorum subsp. carotovorum (strain PC1).